The primary structure comprises 1038 residues: Protein transport protein SEC24 A (1038 aa).

The tract at residues 1 to 247 (MGTENQGYPN…PPHTGGFAQR (247 aa)) is disordered. Pro residues predominate over residues 22-33 (SAPPPGIPPQSG). Zn(2+) contacts are provided by Cys371, Cys374, Cys393, and Cys396. The interval 371–396 (CRRCRTYVNPFVTFTDSGRKWRCNIC) is zinc finger-like.

This sequence belongs to the SEC23/SEC24 family. SEC24 subfamily. Component of the coat protein complex II (COPII), composed of at least five proteins: the Sec23/24 complex, the Sec13/31 complex and Sar1. Interacts with SEC221, SEC23E/SEC23A, SEC23B, SEC23G/SEC23C and SEC23F/SEC23D. As to quaternary structure, (Microbial infection) Interacts with turnip mosaic virus (TuMV) 6K2 in COPII-coated vesicles. Mainly expressed in pollen, leaves, inflorescences, roots and stems, and, to a lower extent, in cotyledons, petioles and hypocotyls.

The protein localises to the cytoplasmic vesicle. It is found in the COPII-coated vesicle membrane. Its subcellular location is the endoplasmic reticulum membrane. The protein resides in the golgi apparatus membrane. It localises to the cytoplasm. The protein localises to the cytosol. Functionally, essential protein. Component of the coat protein complex II (COPII), that covers ER-derived vesicles involved in transport from the endoplasmic reticulum to the Golgi apparatus. COPII is composed of at least five proteins: the SEC23/24 complex, the SEC13/31 complex, and the protein SAR1. Acts in the cytoplasm to promote the transport of secretory, plasma membrane, and vacuolar proteins from the endoplasmic reticulum to the Golgi complex. Involved in maintaining the dynamic identity of organelles of the early secretory pathway. Regulates cell size patterning, and prevents CDKA;1-, DEK1- and ACR4-dependent endoreduplication and giant cells formation in sepals. Required for male gametophytes (pollen grains) development and transmission. Its function is as follows. (Microbial infection) Contributes to viral systemic infection of turnip mosaic virus (TuMV) by triggering the formation of host endoplasmic reticulum (ER)-derived viral vesicles that carry the viral RNA (vRNA) to plasmodesmata for cell-to-cell viral movement. This chain is Protein transport protein SEC24 A, found in Arabidopsis thaliana (Mouse-ear cress).